Here is a 251-residue protein sequence, read N- to C-terminus: Hydroxyacylglutathione hydrolase (251 aa).

Positions 54, 56, 58, 59, 113, 140, and 178 each coordinate Zn(2+).

It belongs to the metallo-beta-lactamase superfamily. Glyoxalase II family. Monomer. It depends on Zn(2+) as a cofactor.

The enzyme catalyses an S-(2-hydroxyacyl)glutathione + H2O = a 2-hydroxy carboxylate + glutathione + H(+). It participates in secondary metabolite metabolism; methylglyoxal degradation; (R)-lactate from methylglyoxal: step 2/2. Its function is as follows. Thiolesterase that catalyzes the hydrolysis of S-D-lactoyl-glutathione to form glutathione and D-lactic acid. This Synechococcus sp. (strain CC9902) protein is Hydroxyacylglutathione hydrolase.